The sequence spans 363 residues: Phospho-N-acetylmuramoyl-pentapeptide-transferase (363 aa).

11 helical membrane-spanning segments follow: residues 27–47 (AGAACLTALAISLLLGNPLIA), 76–96 (TMGGVLILAALFGSTLLWADL), 97–117 (TDGYVWAVLLTTLSFGAVGFA), 137–157 (LGCEFAASLVGGYWMQSLMPA), 171–191 (WLLPLGFAFPLFAMITITGFG), 202–222 (GLAIVPVIIAALVFGLISYLV), 226–246 (VFADYLQLHAVPGTGELCVFC), 248–268 (ALVGAGLGFLWFNAPPAAVFM), 271–291 (TGSLSLGGALGAIAVAVKHEL), 292–312 (VLCIVGGLFVVETLSVIIQVF), and 340–360 (KIVIRFWIVSIVLGLCGLATL).

It belongs to the glycosyltransferase 4 family. MraY subfamily. The cofactor is Mg(2+).

Its subcellular location is the cell inner membrane. The catalysed reaction is UDP-N-acetyl-alpha-D-muramoyl-L-alanyl-gamma-D-glutamyl-meso-2,6-diaminopimeloyl-D-alanyl-D-alanine + di-trans,octa-cis-undecaprenyl phosphate = di-trans,octa-cis-undecaprenyl diphospho-N-acetyl-alpha-D-muramoyl-L-alanyl-D-glutamyl-meso-2,6-diaminopimeloyl-D-alanyl-D-alanine + UMP. It functions in the pathway cell wall biogenesis; peptidoglycan biosynthesis. Catalyzes the initial step of the lipid cycle reactions in the biosynthesis of the cell wall peptidoglycan: transfers peptidoglycan precursor phospho-MurNAc-pentapeptide from UDP-MurNAc-pentapeptide onto the lipid carrier undecaprenyl phosphate, yielding undecaprenyl-pyrophosphoryl-MurNAc-pentapeptide, known as lipid I. This chain is Phospho-N-acetylmuramoyl-pentapeptide-transferase, found in Gluconacetobacter diazotrophicus (strain ATCC 49037 / DSM 5601 / CCUG 37298 / CIP 103539 / LMG 7603 / PAl5).